A 62-amino-acid polypeptide reads, in one-letter code: Sec-independent protein translocase protein TatAc (62 aa).

The helical transmembrane segment at 8-28 (ILVILFVGFLVFGPDKLPALG) threads the bilayer.

The protein belongs to the TatA/E family. As to quaternary structure, forms a complex with TatC.

It localises to the cell membrane. Its function is as follows. Part of the twin-arginine translocation (Tat) system that transports large folded proteins containing a characteristic twin-arginine motif in their signal peptide across membranes. TatA could form the protein-conducting channel of the Tat system. The sequence is that of Sec-independent protein translocase protein TatAc from Bacillus subtilis (strain 168).